The primary structure comprises 294 residues: Probable WRKY transcription factor 70 (294 aa).

The disordered stretch occupies residues 72–94 (SQNASCDNDGKFEDSGDSRKRLG). A compositionally biased stretch (basic and acidic residues) spans 79-91 (NDGKFEDSGDSRK). The short motif at 90-97 (RKRLGPVK) is the Nuclear localization signal element. The WRKY DNA-binding region spans 114 to 182 (IESTILEDAF…YIGNHTCNTN (69 aa)). Residues 201–229 (SEDHKSPSLSTSMKEEDNPHRHHGSSTEN) form a disordered region.

Belongs to the WRKY group III family. As to quaternary structure, interacts with WRKY30. Binds to BZR2/BES1 to cooperatively regulate the expression of target genes. Binds to unmodified (i.e. not sumoylated) NPR1. In terms of processing, phosphorylated and destabilized by ASK7/BIN2. In terms of tissue distribution, expressed in leaves and flowers.

It is found in the nucleus. Transcription factor involved in senescence, biotic and abiotic stress responses by modulating various phytohormones signaling pathways. Interacts specifically with the W box (5'-(T)TGAC[CT]-3'), a frequently occurring elicitor-responsive cis-acting element. Binds to the 5'-[CT]GACTTTT-3' motif in promoters of target genes to induce their expression. Binding to the W-box element of PR-1 promoter is mediated by not-sumoylated NPR1 in the absence of salicylic acid. Plays an important but not indispensable role in jasmonate and salicylic acid signaling. Positively regulates the salicylic acid (SA)-mediated signal pathway, but negatively the jasmonic acid (JA)-mediated signal pathway, thus determining the balance between these mutually antagonistic pathways. Together with WRKY46, WRKY53 and WRKY54, prevents defense response to the necrotrophic pathogens P.carotovorum and B.cinerea, but promotes defense responses (including SA-induced pathogenesis-related (PR) genes expression) against biotrophic/hemibiotrophic SA-monitored pathogens (e.g. P.syringae, E.carotovora subsp. carotovora SCC3193 and E.cichoracearum), probably by regulating negatively the JA/ET and positively the SA signaling pathways. Contributes to the suppression of jasmonic acid (MeJA)-induced expression of JA-responsive genes (e.g. PDF1.2). Promotes susceptibility to JA-monitored pathogens (e.g. A.brassicicola), probably by facilitating SA-controlled suppression of JA-mediated defense. Represses the biosynthesis of the phytoalexin camalexin and indol-3-ylmethyl glucosinolate (IGS). Represses both SA and JA/ethylene (ET) mediated defense marker genes expression. Negative regulator of SA biosynthesis. Negative regulator of EDS1-dependent defense against E.amylovora. Required for RPP4-mediated disease resistance and basal defense against H.parasitica, probably via late up-regulation (LURP) of resistance genes (e.g. CML10/CaBP22 and LURP1). Probably involved in defense responses toward insects (e.g. P.xylostella and B.brassicae). Together with WRKY54, negative regulator of developmental senescence, probably via the regulation of several senescence-associated markers genes. Together with WRKY46 and WRKY54, promotes brassinosteroid (BR)-regulated plant growth but prevent drought response by modulating gene expression. In collaboration with WRKY54, prevents stomatal closure and, consequently, osmotic stress tolerance. Regulates rhizobacterium B.cereus AR156-induced systemic resistance (ISR) to P.syringae pv. tomato DC3000. The sequence is that of Probable WRKY transcription factor 70 from Arabidopsis thaliana (Mouse-ear cress).